A 374-amino-acid polypeptide reads, in one-letter code: UDP-N-acetylglucosamine--N-acetylmuramyl-(pentapeptide) pyrophosphoryl-undecaprenol N-acetylglucosamine transferase (374 aa).

UDP-N-acetyl-alpha-D-glucosamine-binding positions include 13–15 (TGG), Asn124, Arg165, Ser193, and Gln294.

This sequence belongs to the glycosyltransferase 28 family. MurG subfamily.

It is found in the cell inner membrane. It catalyses the reaction di-trans,octa-cis-undecaprenyl diphospho-N-acetyl-alpha-D-muramoyl-L-alanyl-D-glutamyl-meso-2,6-diaminopimeloyl-D-alanyl-D-alanine + UDP-N-acetyl-alpha-D-glucosamine = di-trans,octa-cis-undecaprenyl diphospho-[N-acetyl-alpha-D-glucosaminyl-(1-&gt;4)]-N-acetyl-alpha-D-muramoyl-L-alanyl-D-glutamyl-meso-2,6-diaminopimeloyl-D-alanyl-D-alanine + UDP + H(+). The protein operates within cell wall biogenesis; peptidoglycan biosynthesis. Cell wall formation. Catalyzes the transfer of a GlcNAc subunit on undecaprenyl-pyrophosphoryl-MurNAc-pentapeptide (lipid intermediate I) to form undecaprenyl-pyrophosphoryl-MurNAc-(pentapeptide)GlcNAc (lipid intermediate II). The protein is UDP-N-acetylglucosamine--N-acetylmuramyl-(pentapeptide) pyrophosphoryl-undecaprenol N-acetylglucosamine transferase of Rhizobium etli (strain CIAT 652).